A 325-amino-acid polypeptide reads, in one-letter code: Phosphate import ATP-binding protein PstB (325 aa).

The ABC transporter domain occupies 79 to 320 (IDNYNLWYSN…PNNEKTKDYI (242 aa)). Position 111-118 (111-118 (GPSGCGKS)) interacts with ATP.

Belongs to the ABC transporter superfamily. Phosphate importer (TC 3.A.1.7) family. In terms of assembly, the complex is composed of two ATP-binding proteins (PstB), two transmembrane proteins (PstC and PstA) and a solute-binding protein (PstS).

Its subcellular location is the cell membrane. It carries out the reaction phosphate(out) + ATP + H2O = ADP + 2 phosphate(in) + H(+). Part of the ABC transporter complex PstSACB involved in phosphate import. Responsible for energy coupling to the transport system. In Mycoplasmoides gallisepticum (strain R(low / passage 15 / clone 2)) (Mycoplasma gallisepticum), this protein is Phosphate import ATP-binding protein PstB.